The primary structure comprises 437 residues: Serine carboxypeptidase-like 7 (437 aa).

The signal sequence occupies residues M1–S25. Intrachain disulfides connect C84/C327, C248/C262, and C286/C293. Residue N105 is glycosylated (N-linked (GlcNAc...) asparagine). S180 is an active-site residue. N-linked (GlcNAc...) asparagine glycosylation is present at N346. D362 is an active-site residue. An N-linked (GlcNAc...) asparagine glycan is attached at N378. Residue H415 is part of the active site.

Belongs to the peptidase S10 family. In terms of tissue distribution, ubiquitous.

The protein localises to the secreted. Probable carboxypeptidase. This chain is Serine carboxypeptidase-like 7 (SCPL7), found in Arabidopsis thaliana (Mouse-ear cress).